A 119-amino-acid chain; its full sequence is Auxin-responsive protein SAUR78 (119 aa).

The protein belongs to the ARG7 family.

In terms of biological role, may be involved in the regulation of ethylene receptor signaling. Promotes cell expansion and plant growth. The polypeptide is Auxin-responsive protein SAUR78 (Arabidopsis thaliana (Mouse-ear cress)).